We begin with the raw amino-acid sequence, 122 residues long: uncharacterized protein (122 aa).

A run of 2 helical transmembrane segments spans residues 34 to 54 (IIFL…GVLV) and 91 to 111 (FVLA…FVSF).

It is found in the cell membrane. This is an uncharacterized protein from Mycoplasma pneumoniae (strain ATCC 29342 / M129 / Subtype 1) (Mycoplasmoides pneumoniae).